The sequence spans 380 residues: Homeobox protein ceh-6 (380 aa).

A compositionally biased stretch (low complexity) spans 1-25 (MLIPSSSSIPSSLSASASDSEPSSL). Disordered stretches follow at residues 1 to 31 (MLIP…SGIS), 167 to 190 (SGSV…SEQT), and 265 to 286 (GSPN…KKRT). Positions 187 to 261 (SEQTCPDDLE…LLFKWLEEAD (75 aa)) constitute a POU-specific domain. The homeobox DNA-binding region spans 281-340 (KRKKRTSIEVNVKSRLEFHFQSNQKPNAQEITQVAMELQLEKEVVRVWFCNRRQKEKRIA).

The protein belongs to the POU transcription factor family. Class-3 subfamily. As to quaternary structure, interacts with egl-27, sox-2 and sem-4. Interacts with wdr-5.1. As to expression, expressed in a series of neurons in the ring ganglia, excretory cell, dividing neuroblasts in the ventral cord and rectal cells.

The protein resides in the nucleus. Functionally, vital for embryonic development and essential for the proper function of the excretory cell. Required for the transdifferentiation of the Y rectal epithelial cell to the PDA motor neuron during larval development. The chain is Homeobox protein ceh-6 from Caenorhabditis elegans.